We begin with the raw amino-acid sequence, 418 residues long: 3-isopropylmalate dehydratase large subunit (418 aa).

[4Fe-4S] cluster-binding residues include Cys298, Cys358, and Cys361.

The protein belongs to the aconitase/IPM isomerase family. LeuC type 2 subfamily. In terms of assembly, heterodimer of LeuC and LeuD. [4Fe-4S] cluster is required as a cofactor.

The enzyme catalyses (2R,3S)-3-isopropylmalate = (2S)-2-isopropylmalate. Its pathway is amino-acid biosynthesis; L-leucine biosynthesis; L-leucine from 3-methyl-2-oxobutanoate: step 2/4. Catalyzes the isomerization between 2-isopropylmalate and 3-isopropylmalate, via the formation of 2-isopropylmaleate. This chain is 3-isopropylmalate dehydratase large subunit, found in Thermoanaerobacter sp. (strain X514).